Reading from the N-terminus, the 605-residue chain is Sulfite reductase [NADPH] flavoprotein alpha-component (605 aa).

A Flavodoxin-like domain is found at 68-206; sequence VTVLYGSQTG…PAAEWLEGVL (139 aa). FMN-binding positions include 74–78, 121–126, and 154–185; these read SQTGN, STHGEG, and VLAL…KRIS. The segment at 213 to 234 is disordered; it reads GGGSAAPAPAAASQTGESSYSR. The region spanning 235 to 454 is the FAD-binding FR-type domain; the sequence is TNPFRAEVLE…VQHNQNFKLP (220 aa). Residue 392 to 395 participates in FAD binding; the sequence is RLYS. NADP(+) is bound by residues Asp495 and 525–533; that span reads SRDTEEKVY.

As to quaternary structure, alpha(8)-beta(8). The alpha component is a flavoprotein, the beta component is a hemoprotein. It depends on FAD as a cofactor. FMN serves as cofactor.

It carries out the reaction hydrogen sulfide + 3 NADP(+) + 3 H2O = sulfite + 3 NADPH + 4 H(+). Its pathway is sulfur metabolism; hydrogen sulfide biosynthesis; hydrogen sulfide from sulfite (NADPH route): step 1/1. Its function is as follows. Component of the sulfite reductase complex that catalyzes the 6-electron reduction of sulfite to sulfide. This is one of several activities required for the biosynthesis of L-cysteine from sulfate. The flavoprotein component catalyzes the electron flow from NADPH -&gt; FAD -&gt; FMN to the hemoprotein component. The protein is Sulfite reductase [NADPH] flavoprotein alpha-component (cysJ) of Bacillus subtilis (strain 168).